The following is a 584-amino-acid chain: Long-chain-fatty-acid--AMP ligase FadD23 (584 aa).

2 helical membrane-spanning segments follow: residues 199 to 219 (YFAD…WLPF) and 225 to 245 (LVLG…TSPV).

The protein belongs to the ATP-dependent AMP-binding enzyme family.

It is found in the membrane. It carries out the reaction holo-[(hydroxy)phthioceranic acid synthase] + hexadecanoate + ATP = hexadecanoyl-[(hydroxy)phthioceranic acid synthase] + AMP + diphosphate. It catalyses the reaction holo-[(hydroxy)phthioceranic acid synthase] + octadecanoate + ATP = octadecanoyl-[(hydroxy)phthioceranic acid synthase] + AMP + diphosphate. Its pathway is lipid metabolism; fatty acid biosynthesis. Its function is as follows. Catalyzes the activation of long-chain fatty acids as acyl-adenylates (acyl-AMP), which are then transferred to the multifunctional polyketide synthase (PKS) type III for further chain extension. Involved in the biosynthesis of sulfolipid 1 (SL-1). The chain is Long-chain-fatty-acid--AMP ligase FadD23 (fadD23) from Mycobacterium bovis (strain ATCC BAA-935 / AF2122/97).